Here is a 489-residue protein sequence, read N- to C-terminus: MGWKDAAEPVLSRMPAVARPEGHVPFRRKLGWTGGILVLYFFLTNVTLFGLDAATANDLFGQFRSILAGQQGSVLQLGIGPIVTASIVLQLLGGADLLGLDTDNNPRDQVLYQGLQKLLVGVMICLTGLPMVFAGNFLPADQAVATSLGIGTVGVKGLIFAQIAVGGVLILFMDEIVSKWGVGSGVGLFIIAGVSQQLVGGLFSWQGLGGTSGFFATWIGIITGAIELPASPTDLLSTVFLGQGQLLALITTLLIFGIVVYAESVRVEIPLSHARVKGARGRFPVKLIYASVLPMILVRALQANIQFLGRFLNSSWVGMPAWLGQYTSGQVTGGLLYYLAPIQSRSDWMWFLGLTSADPLDIAIRVLIDLIFMIVGGAVFAIFWVETTGMGPKSTAQQIQNSGMQIPGFRRNPQVIERVMERYIPQVTVIGGALVGLLAVMANMLGTIGAVSGTGLLLTVSITYKLYEEIAEEQLMEMHPMMRNMFGSE.

At 1 to 20 the chain is on the cytoplasmic side; that stretch reads MGWKDAAEPVLSRMPAVARP. Residues 21 to 47 form a helical membrane-spanning segment; sequence EGHVPFRRKLGWTGGILVLYFFLTNVT. Over 48 to 59 the chain is Extracellular; sequence LFGLDAATANDL. Positions 60–67 form an intramembrane region, helical; sequence FGQFRSIL. Residues 60-88 traverse the membrane as a discontinuously helical segment; it reads FGQFRSILAGQQGSVLQLGIGPIVTASIV. An intramembrane segment occupies 68–79; the sequence is AGQQGSVLQLGI. Positions 80 to 88 form an intramembrane region, helical; the sequence is GPIVTASIV. Topologically, residues 89 to 110 are cytoplasmic; that stretch reads LQLLGGADLLGLDTDNNPRDQV. A helical transmembrane segment spans residues 111 to 135; sequence LYQGLQKLLVGVMICLTGLPMVFAG. Residues 136–153 are Extracellular-facing; the sequence is NFLPADQAVATSLGIGTV. Residues 154–178 form a helical membrane-spanning segment; it reads GVKGLIFAQIAVGGVLILFMDEIVS. Residues 179–184 are Cytoplasmic-facing; it reads KWGVGS. A helical transmembrane segment spans residues 185 to 203; that stretch reads GVGLFIIAGVSQQLVGGLF. Residues 204–244 lie on the Extracellular side of the membrane; the sequence is SWQGLGGTSGFFATWIGIITGAIELPASPTDLLSTVFLGQG. The chain crosses the membrane as a helical span at residues 245 to 266; that stretch reads QLLALITTLLIFGIVVYAESVR. Topologically, residues 267 to 291 are cytoplasmic; sequence VEIPLSHARVKGARGRFPVKLIYAS. A helical membrane pass occupies residues 292–313; it reads VLPMILVRALQANIQFLGRFLN. At 314–364 the chain is on the extracellular side; it reads SSWVGMPAWLGQYTSGQVTGGLLYYLAPIQSRSDWMWFLGLTSADPLDIAI. The chain crosses the membrane as a helical span at residues 365–384; that stretch reads RVLIDLIFMIVGGAVFAIFW. The Cytoplasmic segment spans residues 385 to 427; sequence VETTGMGPKSTAQQIQNSGMQIPGFRRNPQVIERVMERYIPQV. A helical membrane pass occupies residues 428–446; sequence TVIGGALVGLLAVMANMLG. Residues 447–450 lie on the Extracellular side of the membrane; that stretch reads TIGA. The chain crosses the membrane as a helical span at residues 451–465; it reads VSGTGLLLTVSITYK. The Cytoplasmic segment spans residues 466-488; sequence LYEEIAEEQLMEMHPMMRNMFGS.

It belongs to the SecY/SEC61-alpha family. As to quaternary structure, component of the Sec protein translocase complex. Heterotrimer consisting of alpha (SecY), beta (SecG) and gamma (SecE) subunits. The heterotrimers can form oligomers, although 1 heterotrimer is thought to be able to translocate proteins. Interacts with the ribosome. May interact with SecDF, and other proteins may be involved.

It is found in the cell membrane. Its function is as follows. The central subunit of the protein translocation channel SecYEG. Consists of two halves formed by TMs 1-5 and 6-10. These two domains form a lateral gate at the front which open onto the bilayer between TMs 2 and 7, and are clamped together by SecE at the back. The channel is closed by both a pore ring composed of hydrophobic SecY resides and a short helix (helix 2A) on the extracellular side of the membrane which forms a plug. The plug probably moves laterally to allow the channel to open. The ring and the pore may move independently. In Haloferax volcanii (strain ATCC 29605 / DSM 3757 / JCM 8879 / NBRC 14742 / NCIMB 2012 / VKM B-1768 / DS2) (Halobacterium volcanii), this protein is Protein translocase subunit SecY.